We begin with the raw amino-acid sequence, 72 residues long: MSILISPSDNRGWGANMRYRRRASMRGVGRRRLTLRQLLGLGSRRRRRSRPTTVSNRLVVVSTRRRSSRRRR.

The residue at position 2 (Ser-2) is an N-acetylserine; by host. The propeptide occupies 2 to 14 (SILISPSDNRGWG).

Belongs to the adenoviridae histone-like nucleoprotein family. As to quaternary structure, interacts with the core-capsid bridging protein; this interaction bridges the virus core to the capsid. Post-translationally, cleaved near the N-terminus by the viral protease during virion maturation to form the mature protein.

Its subcellular location is the host nucleus. It is found in the host nucleolus. The protein localises to the virion. Functionally, strongly bound to viral DNA and responsible for wrapping and condensing the viral DNA. Probably promotes viral genome import into the nucleus and is still associated with the viral DNA when the latter enters into the host nucleus. The sequence is that of Pre-histone-like nucleoprotein from Galliformes (FAdV-1).